We begin with the raw amino-acid sequence, 513 residues long: Noroxomaritidine synthase (513 aa).

The helical transmembrane segment at 14-34 (HYPEILIAIACFLIFSLLLSA) threads the bilayer. Residue Cys-458 coordinates heme.

This sequence belongs to the cytochrome P450 family. Requires heme as cofactor.

The protein localises to the membrane. The catalysed reaction is 4'-O-methylnorbelladine + reduced [NADPH--hemoprotein reductase] + O2 = (10bS,4aR)-noroxomaritidine + oxidized [NADPH--hemoprotein reductase] + 2 H2O + H(+). The enzyme catalyses 4'-O-methylnorbelladine + reduced [NADPH--hemoprotein reductase] + O2 = (10bR,4aS)-noroxomaritidine + oxidized [NADPH--hemoprotein reductase] + 2 H2O + H(+). It functions in the pathway alkaloid biosynthesis. Functionally, cytochrome P450 that catalyzes an intramolecular para-para' C-C phenol coupling of 4'-O-methylnorbelladine in alkaloids biosynthesis, including haemanthamine- and crinamine-type alkaloids, promising anticancer agents. Catalyzes the formation of (10bR,4aS)-noroxomaritidine and (10bS,4aR)-noroxomaritidine from 4'-O-methylnorbelladine. Also produces N-demethylnarwedine as a minor product. Involved in the biosynthesis of haemanthamine. Can also use 4'-O-methyl-N-methylnorbelladine, (S)- and (R)-coclaurine as substrates, but not 3'-O-methylnorbelladine, 3',4'-O-dimethylnorbelladine, norbelladine, haemanthamine, (10bS,4aR)- or (10bR,4aS)-noroxomaritidine, isovanillin or tyramine. This chain is Noroxomaritidine synthase, found in Narcissus aff. pseudonarcissus MK-2014 (Daffodil).